Reading from the N-terminus, the 1212-residue chain is Periplasmic/secreted acid trehalase ATH1 (1212 aa).

At 1–82 (MGFKDKILFW…STRVKIRRQN (82 aa)) the chain is on the cytoplasmic side. Residues 83–103 (ILNTTLILGMLIALVIWTAIL) traverse the membrane as a helical segment. Residues 104–1212 (STNSYFSSSL…ATIREIVLQE (1109 aa)) are Periplasmic-facing. Residues N243, N275, N296, N362, N414, N428, and N521 are each glycosylated (N-linked (GlcNAc...) asparagine). 546-547 (WD) contributes to the substrate binding site. 4 N-linked (GlcNAc...) asparagine glycosylation sites follow: N572, N601, N661, and N671. Residue E677 is the Proton donor of the active site. Residues N729 and N738 are each glycosylated (N-linked (GlcNAc...) asparagine). Residue 744–745 (KQ) coordinates substrate. Residues N912, N938, N993, N1011, N1033, N1052, N1070, N1097, and N1165 are each glycosylated (N-linked (GlcNAc...) asparagine).

It belongs to the glycosyl hydrolase 65 family. In terms of assembly, homodimer.

Its subcellular location is the secreted. The protein resides in the periplasm. It localises to the membrane. It carries out the reaction alpha,alpha-trehalose + H2O = alpha-D-glucose + beta-D-glucose. Its function is as follows. Periplasmic/secreted acid trehalase that catalyzes hydrolysis of the disaccharide trehalose and required for growth on trehalose as carbon source. Growth on trehalose is not restricted to respiration. This Candida glabrata (Yeast) protein is Periplasmic/secreted acid trehalase ATH1.